Consider the following 291-residue polypeptide: MPELPEVETVRRGLQPAMEGFRIDRAVAHRENLRFPLQKDFVARLTGQTVTGLGRRAKYLLADLSSGDVLLMHLGMSGSFRVVEADGETRPGEFHYPRSEDRTHDHVVFEMASGARVVFNDPRRFGFMKVFPRSEIETEPHLKGLGPEPLGNAFDASLLAKACAGKQTSLKAALLDQRVVAGLGNIYVCEALFRAHLSPKRKASTLANRKDEPTDHAVRLTEAIREVLGEAIKAGGSSLRDHRQTSGELGYFQHAFKVYDREGEPCPTCGGTVQRFVQNGRSTFWCPKCQK.

The active-site Schiff-base intermediate with DNA is the Pro-2. Glu-3 functions as the Proton donor in the catalytic mechanism. The active-site Proton donor; for beta-elimination activity is the Lys-58. 3 residues coordinate DNA: His-104, Arg-123, and Lys-166. The FPG-type zinc-finger motif lies at Lys-257 to Lys-291. The active-site Proton donor; for delta-elimination activity is Arg-281.

Belongs to the FPG family. Monomer. The cofactor is Zn(2+).

It catalyses the reaction Hydrolysis of DNA containing ring-opened 7-methylguanine residues, releasing 2,6-diamino-4-hydroxy-5-(N-methyl)formamidopyrimidine.. The catalysed reaction is 2'-deoxyribonucleotide-(2'-deoxyribose 5'-phosphate)-2'-deoxyribonucleotide-DNA = a 3'-end 2'-deoxyribonucleotide-(2,3-dehydro-2,3-deoxyribose 5'-phosphate)-DNA + a 5'-end 5'-phospho-2'-deoxyribonucleoside-DNA + H(+). Functionally, involved in base excision repair of DNA damaged by oxidation or by mutagenic agents. Acts as a DNA glycosylase that recognizes and removes damaged bases. Has a preference for oxidized purines, such as 7,8-dihydro-8-oxoguanine (8-oxoG). Has AP (apurinic/apyrimidinic) lyase activity and introduces nicks in the DNA strand. Cleaves the DNA backbone by beta-delta elimination to generate a single-strand break at the site of the removed base with both 3'- and 5'-phosphates. The sequence is that of Formamidopyrimidine-DNA glycosylase from Rhodopseudomonas palustris (strain ATCC BAA-98 / CGA009).